Reading from the N-terminus, the 213-residue chain is Uridine kinase (213 aa).

14–21 (GASASGKS) is an ATP binding site.

This sequence belongs to the uridine kinase family.

The protein resides in the cytoplasm. The enzyme catalyses uridine + ATP = UMP + ADP + H(+). It catalyses the reaction cytidine + ATP = CMP + ADP + H(+). It functions in the pathway pyrimidine metabolism; CTP biosynthesis via salvage pathway; CTP from cytidine: step 1/3. The protein operates within pyrimidine metabolism; UMP biosynthesis via salvage pathway; UMP from uridine: step 1/1. In Vibrio campbellii (strain ATCC BAA-1116), this protein is Uridine kinase.